The primary structure comprises 518 residues: Tropomyosin-1, isoforms 33/34 (518 aa).

A coiled-coil region spans residues 14-267; it reads DKDGALERAL…DDLIVEKERY (254 aa). Disordered stretches follow at residues 101-125 and 288-518; these read RSEERLGSATAKLSEASQAADESER and FWNP…APPA. Pro residues predominate over residues 293 to 305; it reads NPKPPTPKLPTPT. Over residues 318–348 the composition is skewed to low complexity; it reads AAEAAAAAEAEAAEAAAAAGEAGPDGAPAAP. Pro residues-rich tracts occupy residues 357 to 374 and 394 to 405; these read EPTPPKEPTPPPPPPPPF and EPPPPGSEPEPV. Low complexity predominate over residues 406-518; it reads PAAEGEAAPA…AAAEGEAPPA (113 aa).

The protein belongs to the tropomyosin family. In terms of assembly, homodimer. In terms of tissue distribution, both isoforms are only expressed in indirect flight muscles.

Its subcellular location is the cytoplasm. It localises to the cytoskeleton. Tropomyosin, in association with the troponin complex, plays a central role in the calcium dependent regulation of muscle contraction. The sequence is that of Tropomyosin-1, isoforms 33/34 (Tm1) from Drosophila melanogaster (Fruit fly).